Reading from the N-terminus, the 542-residue chain is uncharacterized protein (542 aa).

Helical transmembrane passes span 12–32 (LVFG…GTVL), 57–77 (FGDV…AILY), 94–114 (VIVM…SWTA), 123–143 (AAAV…AGLA), 168–188 (LFAV…AALV), 191–211 (FVVS…LVTL), 216–236 (IDAP…AFLL), 243–263 (SGVV…PTVI), 277–297 (IATF…IPGA), 313–333 (VLAL…VQAT), 358–378 (VTSW…AVPM), and 391–411 (LIIF…GTSL).

Belongs to the monovalent cation:proton antiporter 1 (CPA1) transporter (TC 2.A.36) family.

It is found in the cell membrane. This is an uncharacterized protein from Mycobacterium bovis (strain ATCC BAA-935 / AF2122/97).